A 995-amino-acid polypeptide reads, in one-letter code: Probable copper-transporting ATPase HMA5 (995 aa).

Residues M1 to S299 lie on the Cytoplasmic side of the membrane. HMA domains lie at S51 to S117 and Q129 to V195. Residues C62, C65, C140, and C143 each coordinate Cu(+). Positions S204–S270 constitute an HMA 3; degenerate domain. The helical transmembrane segment at F300–P321 threads the bilayer. Topologically, residues G322–I340 are extracellular. A helical transmembrane segment spans residues I341–G360. The Cytoplasmic segment spans residues S361–R367. A helical membrane pass occupies residues G368 to L388. Residues Y389 to F406 are Extracellular-facing. The helical transmembrane segment at E407–K427 threads the bilayer. Residues G428–R561 are Cytoplasmic-facing. The chain crosses the membrane as a helical span at residues I562 to A584. At G585–A605 the chain is on the extracellular side. The helical transmembrane segment at L606–L623 threads the bilayer. The Cytoplasmic portion of the chain corresponds to A624–I920. D661 (4-aspartylphosphate intermediate) is an active-site residue. Positions 866 and 870 each coordinate Mg(2+). A helical transmembrane segment spans residues R921–G940. Residues V941–P952 lie on the Extracellular side of the membrane. A helical membrane pass occupies residues W953–L971. Topologically, residues L972–V995 are cytoplasmic.

Belongs to the cation transport ATPase (P-type) (TC 3.A.3) family. Type IB subfamily. In terms of assembly, interacts with ATX1. In terms of tissue distribution, expressed in roots and flowers.

The protein resides in the membrane. It catalyses the reaction Cu(+)(in) + ATP + H2O = Cu(+)(out) + ADP + phosphate + H(+). Functionally, involved in copper import into the cell. May play a role in copper detoxification in roots. The protein is Probable copper-transporting ATPase HMA5 (HMA5) of Arabidopsis thaliana (Mouse-ear cress).